The chain runs to 315 residues: N-acetyl-gamma-glutamyl-phosphate reductase (315 aa).

The active site involves Cys-117.

It belongs to the NAGSA dehydrogenase family. Type 2 subfamily.

The protein localises to the cytoplasm. It carries out the reaction N-acetyl-L-glutamate 5-semialdehyde + phosphate + NADP(+) = N-acetyl-L-glutamyl 5-phosphate + NADPH + H(+). Its pathway is amino-acid biosynthesis; L-arginine biosynthesis; N(2)-acetyl-L-ornithine from L-glutamate: step 3/4. Its function is as follows. Catalyzes the NADPH-dependent reduction of N-acetyl-5-glutamyl phosphate to yield N-acetyl-L-glutamate 5-semialdehyde. The chain is N-acetyl-gamma-glutamyl-phosphate reductase from Burkholderia lata (strain ATCC 17760 / DSM 23089 / LMG 22485 / NCIMB 9086 / R18194 / 383).